Here is a 299-residue protein sequence, read N- to C-terminus: GTPase Era (299 aa).

The region spanning Lys4–Glu171 is the Era-type G domain. Residues Gly12–Ser19 are G1. Gly12–Ser19 contributes to the GTP binding site. Positions Gln38–Asn42 are G2. Residues Asp59–Gly62 form a G3 region. GTP-binding positions include Asp59–Ile63 and Asn121–Asp124. Residues Asn121–Asp124 form a G4 region. The tract at residues Ile150–Ala152 is G5. The region spanning Thr202–Lys280 is the KH type-2 domain.

It belongs to the TRAFAC class TrmE-Era-EngA-EngB-Septin-like GTPase superfamily. Era GTPase family. As to quaternary structure, monomer.

Its subcellular location is the cytoplasm. It localises to the cell membrane. An essential GTPase that binds both GDP and GTP, with rapid nucleotide exchange. Plays a role in 16S rRNA processing and 30S ribosomal subunit biogenesis and possibly also in cell cycle regulation and energy metabolism. The protein is GTPase Era of Streptococcus agalactiae serotype III (strain NEM316).